A 406-amino-acid polypeptide reads, in one-letter code: 3-oxoacyl-[acyl-carrier-protein] synthase 1 (406 aa).

Residues 1-403 (MKRAVITGLG…GTNATLVMRK (403 aa)) enclose the Ketosynthase family 3 (KS3) domain. Catalysis depends on for beta-ketoacyl synthase activity residues C163, H298, and H333.

It belongs to the thiolase-like superfamily. Beta-ketoacyl-ACP synthases family. Homodimer.

The protein localises to the cytoplasm. The enzyme catalyses a fatty acyl-[ACP] + malonyl-[ACP] + H(+) = a 3-oxoacyl-[ACP] + holo-[ACP] + CO2. It carries out the reaction (3Z)-decenoyl-[ACP] + malonyl-[ACP] + H(+) = 3-oxo-(5Z)-dodecenoyl-[ACP] + holo-[ACP] + CO2. It functions in the pathway lipid metabolism; fatty acid biosynthesis. Its function is as follows. Involved in the type II fatty acid elongation cycle. Catalyzes the elongation of a wide range of acyl-ACP by the addition of two carbons from malonyl-ACP to an acyl acceptor. Can also use unsaturated fatty acids. Catalyzes a key reaction in unsaturated fatty acid (UFA) synthesis, the elongation of the cis-3-decenoyl-ACP produced by FabA. The polypeptide is 3-oxoacyl-[acyl-carrier-protein] synthase 1 (fabB) (Escherichia coli O6:H1 (strain CFT073 / ATCC 700928 / UPEC)).